The chain runs to 394 residues: MILKELPKQRPNDFTKVLQDVEKIISYVKQKGDEALIELEEKFDKVKLTSIKFPEVDKLASQISQDLKMAIDVIFTQIYEFNNSIKPPNIIGGSANGIDYGIMWKSIERVGIYVPGGEKAYPSTLLMAGVPALVAGVKEIYVSSPPTKINSAIAYISLKLGVKEIYAIGGAQAIAAMAYGTQTVKKVDKIVGPGNIYVQAAKYLVSSDVGIDGIEGPTELVIIADETANPSNIILDLKAQAEHGRSTFLVLLSNSDKIINFVSKELDVDSNIYYVIKVNSIDEAIDIANEIAPEHLSLQISSAREYLPKVKNAGAVTLGNTPPAIIDYSAGPNHILPTNGWAKIRGGISVYDYLKMIMYASTSNPEKKLVEASKILAKYEGFVFHADSIGVRYE.

Residues Tyr-113, Gln-172, and Asn-195 each contribute to the NAD(+) site. Substrate contacts are provided by Thr-218, Gln-240, and His-243. Zn(2+) is bound by residues Gln-240 and His-243. Catalysis depends on proton acceptor residues Glu-294 and His-295. Substrate is bound by residues His-295, Asp-327, Glu-380, and His-385. Asp-327 contributes to the Zn(2+) binding site. Residue His-385 coordinates Zn(2+).

This sequence belongs to the histidinol dehydrogenase family. Zn(2+) serves as cofactor.

The catalysed reaction is L-histidinol + 2 NAD(+) + H2O = L-histidine + 2 NADH + 3 H(+). It functions in the pathway amino-acid biosynthesis; L-histidine biosynthesis; L-histidine from 5-phospho-alpha-D-ribose 1-diphosphate: step 9/9. Catalyzes the sequential NAD-dependent oxidations of L-histidinol to L-histidinaldehyde and then to L-histidine. In Sulfurisphaera tokodaii (strain DSM 16993 / JCM 10545 / NBRC 100140 / 7) (Sulfolobus tokodaii), this protein is Histidinol dehydrogenase.